The primary structure comprises 101 residues: Urease subunit beta (101 aa).

The protein belongs to the urease beta subunit family. In terms of assembly, heterotrimer of UreA (gamma), UreB (beta) and UreC (alpha) subunits. Three heterotrimers associate to form the active enzyme.

The protein localises to the cytoplasm. The enzyme catalyses urea + 2 H2O + H(+) = hydrogencarbonate + 2 NH4(+). The protein operates within nitrogen metabolism; urea degradation; CO(2) and NH(3) from urea (urease route): step 1/1. The sequence is that of Urease subunit beta from Nostoc punctiforme (strain ATCC 29133 / PCC 73102).